A 71-amino-acid polypeptide reads, in one-letter code: Omega-conotoxin-like CnVIIE (71 aa).

Residues 1–22 (MKLTCVVIVAVLLLTACQLITA) form the signal peptide. A propeptide spanning residues 23–45 (DDSRGTQKHRALRSDTKLSMSTR) is cleaved from the precursor. 3 disulfide bridges follow: C46–C61, C53–C65, and C60–C70. P52 bears the 4-hydroxyproline; partial mark. C70 carries the post-translational modification Cysteine amide.

This sequence belongs to the conotoxin M superfamily. Expressed by the venom duct.

Its subcellular location is the secreted. Functionally, omega-conotoxins act at presynaptic membranes, they bind and block voltage-gated calcium channels (Cav). The protein is Omega-conotoxin-like CnVIIE of Conus consors (Singed cone).